The chain runs to 184 residues: Photosystem I assembly protein Ycf4 (184 aa).

2 helical membrane passes run 22–42 and 57–77; these read FCWAVILFLGSLGFLLVGTSS and ILFFPQGIVMSFYGIAGLFIS.

Belongs to the Ycf4 family.

It is found in the plastid. Its subcellular location is the chloroplast thylakoid membrane. Functionally, seems to be required for the assembly of the photosystem I complex. This chain is Photosystem I assembly protein Ycf4, found in Panax ginseng (Korean ginseng).